The primary structure comprises 1465 residues: Myomesin-2 (1465 aa).

The segment at 38 to 61 (ASTQASSQKSLSQRSSSQRASSQT) is disordered. A compositionally biased stretch (low complexity) spans 41–61 (QASSQKSLSQRSSSQRASSQT). Ig-like C2-type domains are found at residues 154–245 (PEIL…AAVV) and 266–371 (PLSS…AFLF). Fibronectin type-III domains follow at residues 385–480 (APMD…ALDP), 513–608 (PPTG…AQDV), 614–707 (APGR…VQAA), 710–812 (VPSH…TMPE), and 815–912 (PAYD…ARPG). Ig-like C2-type domains lie at 904-1002 (PVLV…EELE), 1130-1211 (PHFA…QDVS), and 1345-1434 (RLIG…VTVS). The tract at residues 1442-1465 (IPDMAPPQQAKPKLIPASASAAGQ) is disordered.

As to quaternary structure, interacts with TTN/titin.

The protein resides in the cytoplasm. Its subcellular location is the myofibril. It is found in the sarcomere. The protein localises to the m line. Its function is as follows. Major component of the vertebrate myofibrillar M band. Binds myosin, titin, and light meromyosin. This binding is dose dependent. The sequence is that of Myomesin-2 (MYOM2) from Homo sapiens (Human).